Reading from the N-terminus, the 62-residue chain is MKASELKAKTVDELKAELLSLLKAQFALRMQHATQQLAKTSELKKVRRDIARVRTVLKEKAV.

The protein belongs to the universal ribosomal protein uL29 family.

In Chromobacterium violaceum (strain ATCC 12472 / DSM 30191 / JCM 1249 / CCUG 213 / NBRC 12614 / NCIMB 9131 / NCTC 9757 / MK), this protein is Large ribosomal subunit protein uL29.